Consider the following 515-residue polypeptide: MDLENVSCPICLRKFDNLQALNAHLDVEHGFNDNEDSLGSNDSRLVNGKQKKARSVDSSAQKLKRSHWEKFKKGKSCCHTCGRTLNNNIGAINCRKCGKLYCRRHLPNMIKLNLSAQYDPRNGKWYNCCHDCFVTKPGYNDYGEVIDLTPEFFKVRNIKREDKNLRLLQLENRFVRLVDGLITLYNTYSRSIIHNLKMNSEMSKLERTVTPWRDDRSVLFCNICSEPFGLLLRKHHCRLCGMVVCDDANRNCSNEISIGYLMSAASDLPFEYNIQKDDLLHIPISIRLCSHCIDMLFIGRKFNKDVRMPLSGIFAKYDSMQNISKVIDSLLPIFEDSLNSLKVETAKDSENTLDPKNLNDLARLRHKLLNSFNLYNTLTRQLLSVEPQSHLERQLQNSIKIASAAYINEKILPLKSLPAILNPEGHKTNEDGQKAEPEVKKLSQLMIENLTIKEVKELREELMVLKEQSYLIESTIQDYKKQRRLEEIVTLNKNLEELHSRIHTVQSKLGDHGFN.

The segment at 6–29 (VSCPICLRKFDNLQALNAHLDVEH) adopts a C2H2-type zinc-finger fold. The segment at 36-58 (DSLGSNDSRLVNGKQKKARSVDS) is disordered. The segment at 72–137 (KKGKSCCHTC…CCHDCFVTKP (66 aa)) adopts an FYVE-type 1; atypical zinc-finger fold. Zn(2+) is bound by residues Cys-78, Cys-81, Cys-94, Cys-97, Cys-102, His-105, Cys-129, Cys-132, Cys-221, Cys-224, Cys-237, Cys-240, Cys-245, Cys-252, Cys-289, and Cys-292. Residues 215-297 (DRSVLFCNIC…LCSHCIDMLF (83 aa)) form an FYVE-type 2 zinc finger.

As to quaternary structure, interacts with VPS21, VPS45, PEP3 and PEP5.

It localises to the vacuole membrane. In terms of biological role, required for vacuole segregation and vacuole protein sorting. Possibly part of a complex which tethers the vacuole membrane to microtubules, either directly or via kinesin or dynein-like motor proteins. Probably functions in several interorganelle traffic pathways. This Saccharomyces cerevisiae (strain ATCC 204508 / S288c) (Baker's yeast) protein is Vacuolar segregation protein PEP7 (PEP7).